Here is a 942-residue protein sequence, read N- to C-terminus: MALTPMMVEYMKTKEEYNDCILFYRLGDFYEMFFDDALTVSRELELVLTGKNCGLEERAPMCGIPHHAAAAYIPRLVTKGYKVAICEQLEDPKQSKGIVKRGVVKVITPGTFIDSNSNLENDNTYLMVISEYEDKFGIAMSDISTGEFKTTSFNNIKMSLLDEISKVSPKEILVDININEELLTEINNVLPVLITKKDFNEFLVSKEELIEQFSDLEVSGLTIEREIPSKVLLKYINETQKMSLTNINLLEQYEIINYMTIDGNSRRNLELTESIREKTKKGSLLWVIDKSATSMGGRTLRKWIDEPLIVKDEIEKRLSGVEEVFNSIGFNEDLRSALKEIYDIERIVGKISNKNVNAKDLLSLKSSLDKLPCIKELLKNTSSELLKGYYENLDELIDVRDLLNDSIKEDPGLGLKEGNIIKDGYNNLVDELRESKLHGKEWIAALENREREFTGIKSLKVGYNKVFGYYIEISKSNYNSIPEGRYIRKQTLANAERFITEELKVMEDKILGSEEKLINLEYSIFVEIRDKIEEEISRLKKSARIISDLDGISTLALVALENDYIKPEINTDGLIKIIDGRHPVVEKVIGKGDFVSNNTALNQTDKELLLITGPNMAGKSTYMRQVALITLMAQMGSFVPATSANISICDKIFTRIGASDDLAGGKSTFMVEMWEVSNILKNATSNSLVLLDEVGRGTSTYDGLSIAWSVIEYITKNKDLRCKTLFATHYHELVKLEGILPGVKNYSVAVKKLKDSVVFLRKIVEGGADESYGIEVAKLAGLPENVINRAREILEDLEGKNTFDINKVSSCSMVSNNIKEIAVDSTKNSEDKVISNAQNIDVNETSCKDTTKEKILRVETQNAEYEEAIKSLKSEITKLQELNKKHNKKHKDVSNDNMQINFEVMEKENFIKELSEVDILGLNPMEAMNTLYRLVTDAKKLQ.

Position 613-620 (613-620 (GPNMAGKS)) interacts with ATP.

This sequence belongs to the DNA mismatch repair MutS family.

Its function is as follows. This protein is involved in the repair of mismatches in DNA. It is possible that it carries out the mismatch recognition step. This protein has a weak ATPase activity. This is DNA mismatch repair protein MutS from Clostridium botulinum (strain Eklund 17B / Type B).